The sequence spans 244 residues: Mediator of RNA polymerase II transcription subunit 8 (244 aa).

A coiled-coil region spans residues 6-30 (QEQLKTLEQSRQRLVQLTRSLASLI).

Belongs to the Mediator complex subunit 8 family. Component of the Mediator complex.

It is found in the nucleus. Component of the Mediator complex, a coactivator involved in the regulated transcription of nearly all RNA polymerase II-dependent genes. Mediator functions as a bridge to convey information from gene-specific regulatory proteins to the basal RNA polymerase II transcription machinery. Mediator is recruited to promoters by direct interactions with regulatory proteins and serves as a scaffold for the assembly of a functional preinitiation complex with RNA polymerase II and the general transcription factors. This Aspergillus oryzae (strain ATCC 42149 / RIB 40) (Yellow koji mold) protein is Mediator of RNA polymerase II transcription subunit 8 (med8).